We begin with the raw amino-acid sequence, 264 residues long: MKKVTINDLIKCKQEGRKFATSTAYDASFAQLFESQDMPVLLVGDSLGMVLQGRNDTLPVTVEDIAYHTRSVRAGSPNCLLMADMPFMSYATPEQACENAATLMRAGANMVKIEGGSWLIETVKMLTERAVPVCAHLGLTPQSVNIFGGYKVQGRDNEQADKMVADALALQNAGAQIVLLECVPASLAKRITEACDVPVIGIGAGNVTDGQILVMHDMFGISANYMPKFSKNFLAETGDMRKAVALYKEEVESALFPDDAHTIA.

Residues Asp-45 and Asp-84 each coordinate Mg(2+). Residues 45–46 (DS), Asp-84, and Lys-112 contribute to the 3-methyl-2-oxobutanoate site. Position 114 (Glu-114) interacts with Mg(2+). Glu-181 (proton acceptor) is an active-site residue.

The protein belongs to the PanB family. In terms of assembly, homodecamer; pentamer of dimers. The cofactor is Mg(2+).

The protein localises to the cytoplasm. The catalysed reaction is 3-methyl-2-oxobutanoate + (6R)-5,10-methylene-5,6,7,8-tetrahydrofolate + H2O = 2-dehydropantoate + (6S)-5,6,7,8-tetrahydrofolate. It participates in cofactor biosynthesis; (R)-pantothenate biosynthesis; (R)-pantoate from 3-methyl-2-oxobutanoate: step 1/2. In terms of biological role, catalyzes the reversible reaction in which hydroxymethyl group from 5,10-methylenetetrahydrofolate is transferred onto alpha-ketoisovalerate to form ketopantoate. This chain is 3-methyl-2-oxobutanoate hydroxymethyltransferase, found in Vibrio atlanticus (strain LGP32) (Vibrio splendidus (strain Mel32)).